The chain runs to 234 residues: N-(5'-phosphoribosyl)anthranilate isomerase 1 (234 aa).

This sequence belongs to the TrpF family.

It carries out the reaction N-(5-phospho-beta-D-ribosyl)anthranilate = 1-(2-carboxyphenylamino)-1-deoxy-D-ribulose 5-phosphate. The protein operates within amino-acid biosynthesis; L-tryptophan biosynthesis; L-tryptophan from chorismate: step 3/5. The sequence is that of N-(5'-phosphoribosyl)anthranilate isomerase 1 (trpF1) from Methanosarcina mazei (strain ATCC BAA-159 / DSM 3647 / Goe1 / Go1 / JCM 11833 / OCM 88) (Methanosarcina frisia).